The sequence spans 399 residues: MALRVAGLFLKKELVAPATQQLRLLRTGNTTRSQFLANSPNTALDKSILQRYRNLETPANRVQATYLWIDGTGENIRLKDRVLDKVPSSVEDLPDWQYDGSSTYQAHGENSDTTLKPRAIYRDPFKPGKNDVIVLCDTYSADGKPTASNKRAAFQAAIDLISDQEPWFGIEQEYTLLDVDGRPFGWPENGFPAPQGPYYCGVGADRVYARDLVEAHVVACLYAGIDFAGTNAEVMPAQWEFQIGPAGIKACDDLWVSRYILQRIAEEYGVVVTFDPKPMEGQWNGAGAHTNFSTKEMRADGGIKAIEEAIEKLSKRHERHIKAYDPKEGKDNERRLVGRLETSSIDKFSWGVANRAVSVRVPRGVATAGKGYLEDRRPSSNCDPYAVCNAIVRTCLLNE.

The N-terminal 27 residues, M1–T27, are a transit peptide targeting the mitochondrion. A GS beta-grasp domain is found at V62–G143. Residues K150–E399 enclose the GS catalytic domain.

It belongs to the glutamine synthetase family. Homooctamer.

The protein localises to the mitochondrion. It carries out the reaction L-glutamate + NH4(+) + ATP = L-glutamine + ADP + phosphate + H(+). The sequence is that of Glutamine synthetase 1, mitochondrial (Gs1) from Drosophila melanogaster (Fruit fly).